Here is a 547-residue protein sequence, read N- to C-terminus: Probable bifunctional tRNA threonylcarbamoyladenosine biosynthesis protein (547 aa).

A kae1 region spans residues 1-329 (MKNTFILGIE…FRTDDVNVTW (329 aa)). His-113, His-117, and Tyr-134 together coordinate Fe cation. L-threonylcarbamoyladenylate contacts are provided by residues 134–138 (YVSGA), Asp-166, Gly-179, Glu-183, and Asn-262. Fe cation is bound at residue Asp-290. A Protein kinase domain is found at 340–547 (EISPEAFLRA…EEIKKRARYA (208 aa)). Residues 355 to 363 (LDNGAEAVI) and Lys-377 each bind ATP. Residue Asp-464 is the Proton acceptor; for kinase activity of the active site.

It in the N-terminal section; belongs to the KAE1 / TsaD family. The protein in the C-terminal section; belongs to the protein kinase superfamily. Tyr protein kinase family. BUD32 subfamily. In terms of assembly, component of the KEOPS complex that consists of Kae1, Bud32, Cgi121 and Pcc1; the whole complex dimerizes. Requires Fe(2+) as cofactor.

It localises to the cytoplasm. The catalysed reaction is L-seryl-[protein] + ATP = O-phospho-L-seryl-[protein] + ADP + H(+). It catalyses the reaction L-threonyl-[protein] + ATP = O-phospho-L-threonyl-[protein] + ADP + H(+). It carries out the reaction L-threonylcarbamoyladenylate + adenosine(37) in tRNA = N(6)-L-threonylcarbamoyladenosine(37) in tRNA + AMP + H(+). Required for the formation of a threonylcarbamoyl group on adenosine at position 37 (t(6)A37) in tRNAs that read codons beginning with adenine. Is a component of the KEOPS complex that is probably involved in the transfer of the threonylcarbamoyl moiety of threonylcarbamoyl-AMP (TC-AMP) to the N6 group of A37. The Kae1 domain likely plays a direct catalytic role in this reaction. The Bud32 domain probably displays kinase activity that regulates Kae1 function. The polypeptide is Probable bifunctional tRNA threonylcarbamoyladenosine biosynthesis protein (Methanosarcina acetivorans (strain ATCC 35395 / DSM 2834 / JCM 12185 / C2A)).